We begin with the raw amino-acid sequence, 620 residues long: Chaperone protein DnaK (620 aa).

Residue T197 is modified to Phosphothreonine; by autocatalysis. Residues 597–620 form a disordered region; that stretch reads AMANKNNAEQPKKKDDDVIDAEVE.

Belongs to the heat shock protein 70 family.

Its function is as follows. Acts as a chaperone. The chain is Chaperone protein DnaK from Helicobacter pylori (strain Shi470).